The following is a 377-amino-acid chain: MADYYDLLGVGRDADADTLKRAYRSKARKYHPDINKEPGAEDRFKEIGRAYEVLSDPQTRARYDQFGEAGLGGAAGASDMGDMGGFADLFETFFQGFGGPGGAAAGRSGRRGPQQGDDLRYDLTIDFEQAVFGQEQEIKIPHLETCDTCGGSGAKAGSGPTTCGTCGGAGQVRRATRTPFGSFTQVAECPNCGGTGQVIADPCNACGGQGVRQVRKKLRINIPAGVDTGTRLRVSGEGNAGQRGGPSGDLYVFLTVKSHPRLRRDGLNILSTVNVSYLQAILGDTIEVETVDGDTVLEIPPGTQPGTVLTLANKGIPKLGNPVARGDQRVQVMVQLPTRLSDPERTLLEELAGHHSARGKQHHHHNSGLFARLFGQK.

The J domain occupies 3-67; that stretch reads DYYDLLGVGR…QTRARYDQFG (65 aa). The CR-type zinc-finger motif lies at 133-215; the sequence is GQEQEIKIPH…CGGQGVRQVR (83 aa). Cys-146, Cys-149, Cys-163, Cys-166, Cys-189, Cys-192, Cys-203, and Cys-206 together coordinate Zn(2+). 4 CXXCXGXG motif repeats span residues 146–153, 163–170, 189–196, and 203–210; these read CDTCGGSG, CGTCGGAG, CPNCGGTG, and CNACGGQG.

Belongs to the DnaJ family. Homodimer. Zn(2+) serves as cofactor.

The protein localises to the cytoplasm. Participates actively in the response to hyperosmotic and heat shock by preventing the aggregation of stress-denatured proteins and by disaggregating proteins, also in an autonomous, DnaK-independent fashion. Unfolded proteins bind initially to DnaJ; upon interaction with the DnaJ-bound protein, DnaK hydrolyzes its bound ATP, resulting in the formation of a stable complex. GrpE releases ADP from DnaK; ATP binding to DnaK triggers the release of the substrate protein, thus completing the reaction cycle. Several rounds of ATP-dependent interactions between DnaJ, DnaK and GrpE are required for fully efficient folding. Also involved, together with DnaK and GrpE, in the DNA replication of plasmids through activation of initiation proteins. The sequence is that of Chaperone protein DnaJ from Parasynechococcus marenigrum (strain WH8102).